Consider the following 101-residue polypeptide: Chaperone modulatory protein CbpM (101 aa).

This sequence belongs to the CbpM family.

Functionally, interacts with CbpA and inhibits both the DnaJ-like co-chaperone activity and the DNA binding activity of CbpA. Together with CbpA, modulates the activity of the DnaK chaperone system. Does not inhibit the co-chaperone activity of DnaJ. The protein is Chaperone modulatory protein CbpM of Pseudomonas entomophila (strain L48).